Here is a 269-residue protein sequence, read N- to C-terminus: Surfeit locus protein 4 (269 aa).

Transmembrane regions (helical) follow at residues 64-84 (FLAS…CILV), 92-112 (YACF…SILW), 157-177 (MQLG…HFDM), 179-199 (FFYI…AIGF), 203-223 (LAAL…NAFW), and 242-262 (TMSV…GVSM). Residues 266–269 (KKEW) carry the Di-lysine motif motif.

The protein belongs to the SURF4 family.

The protein localises to the endoplasmic reticulum membrane. The protein resides in the endoplasmic reticulum-Golgi intermediate compartment membrane. It is found in the golgi apparatus membrane. Its function is as follows. Endoplasmic reticulum cargo receptor that mediates the export of lipoproteins by recruiting cargos into COPII vesicles to facilitate their secretion. Acts as a cargo receptor for lipoproteins bearing both APOB and APOA1, thereby regulating lipoprotein delivery and the maintenance of lipid homeostasis. This is Surfeit locus protein 4 from Gallus gallus (Chicken).